Reading from the N-terminus, the 336-residue chain is F420-dependent glucose-6-phosphate dehydrogenase (336 aa).

Residue Asp39 participates in coenzyme F420-(gamma-Glu)n binding. The active-site Proton donor is the His40. Coenzyme F420-(gamma-Glu)n-binding positions include Thr76 and 107–108 (TG). Glu109 serves as the catalytic Proton acceptor. Residues Asn112, 177 to 178 (GG), and 180 to 181 (AV) contribute to the coenzyme F420-(gamma-Glu)n site. Substrate-binding residues include Thr195, Lys198, Lys259, and Arg283.

This sequence belongs to the F420-dependent glucose-6-phosphate dehydrogenase family. Homodimer.

The catalysed reaction is oxidized coenzyme F420-(gamma-L-Glu)(n) + D-glucose 6-phosphate + H(+) = 6-phospho-D-glucono-1,5-lactone + reduced coenzyme F420-(gamma-L-Glu)(n). Its function is as follows. Catalyzes the coenzyme F420-dependent oxidation of glucose 6-phosphate (G6P) to 6-phosphogluconolactone. Appears to have a role in resistance to oxidative stress, via its consumption of G6P that serves as a source of reducing power to combat oxidative stress in mycobacteria. The protein is F420-dependent glucose-6-phosphate dehydrogenase of Mycobacterium avium (strain 104).